Reading from the N-terminus, the 311-residue chain is Putative F-box protein At1g31090 (311 aa).

The 50-residue stretch at 4–53 (GANSDSIPTDLIYEILSRLSVKPITRFRCVSKLWESIICRQDFTELFHNR) folds into the F-box domain. The segment at 287-311 (RPAEQNTSTSSREDHLVRTVKRKRA) is disordered.

The chain is Putative F-box protein At1g31090 from Arabidopsis thaliana (Mouse-ear cress).